We begin with the raw amino-acid sequence, 194 residues long: Glycerol-3-phosphate acyltransferase (194 aa).

The next 5 helical transmembrane spans lie at 2 to 22, 51 to 71, 80 to 100, 112 to 132, and 155 to 175; these read LIEI…TGLL, SVGI…VLAA, WIAL…FLGF, VFLG…VAVV, and FLSG…LVIW.

This sequence belongs to the PlsY family. In terms of assembly, probably interacts with PlsX.

Its subcellular location is the cell inner membrane. It catalyses the reaction an acyl phosphate + sn-glycerol 3-phosphate = a 1-acyl-sn-glycero-3-phosphate + phosphate. Its pathway is lipid metabolism; phospholipid metabolism. In terms of biological role, catalyzes the transfer of an acyl group from acyl-phosphate (acyl-PO(4)) to glycerol-3-phosphate (G3P) to form lysophosphatidic acid (LPA). This enzyme utilizes acyl-phosphate as fatty acyl donor, but not acyl-CoA or acyl-ACP. In Geobacter metallireducens (strain ATCC 53774 / DSM 7210 / GS-15), this protein is Glycerol-3-phosphate acyltransferase.